The sequence spans 87 residues: Elongation factor Ts, chloroplastic (87 aa).

This sequence belongs to the EF-Ts family.

The protein localises to the plastid. Its subcellular location is the chloroplast. Associates with the EF-Tu.GDP complex and induces the exchange of GDP to GTP. It remains bound to the aminoacyl-tRNA.EF-Tu.GTP complex up to the GTP hydrolysis stage on the ribosome. In Antithamnion sp. (Red alga), this protein is Elongation factor Ts, chloroplastic (tsf).